The chain runs to 144 residues: Ribonuclease VapC45 (144 aa).

Mg(2+) is bound by residues Asp7 and Asp102.

The protein belongs to the PINc/VapC protein family. It depends on Mg(2+) as a cofactor.

Its function is as follows. Toxic component of a type II toxin-antitoxin (TA) system. An RNase. Its cognate antitoxin is VapB45. This is Ribonuclease VapC45 from Mycobacterium tuberculosis (strain CDC 1551 / Oshkosh).